The primary structure comprises 91 residues: Large ribosomal subunit protein bL27 (91 aa).

The segment at 1 to 21 (MAHKKAGGSSRNGRDSESKRL) is disordered.

It belongs to the bacterial ribosomal protein bL27 family.

In Azoarcus sp. (strain BH72), this protein is Large ribosomal subunit protein bL27.